Consider the following 464-residue polypeptide: Galactose-proton symporter (464 aa).

Residues 1 to 15 (MPDAKKQGRSNKAMT) are Cytoplasmic-facing. Residues 16–36 (FFVCFLAALAGLLFGLDIGVI) form a helical membrane-spanning segment. The Periplasmic portion of the chain corresponds to 37 to 56 (AGALPFIADEFQITSHTQEW). Residues 57–77 (VVSSMMFGAAVGAVGSGWLSF) traverse the membrane as a helical segment. Topologically, residues 78 to 84 (KLGRKKS) are cytoplasmic. A helical membrane pass occupies residues 85-105 (LMIGAILFVAGSLFSAAAPNV). Residues 106–112 (EVLILSR) are Periplasmic-facing. The chain crosses the membrane as a helical span at residues 113–133 (VLLGLAVGVASYTAPLYLSEI). Over 134-139 (APEKIR) the chain is Cytoplasmic. A helical membrane pass occupies residues 140–160 (GSMISMYQLMITIGILGAYLS). Over 161–171 (DTAFSYTGAWR) the chain is Periplasmic. Residues 172–192 (WMLGVIIIPAILLLIGVFFLP) form a helical membrane-spanning segment. The Cytoplasmic segment spans residues 193–250 (DSPRWFAAKRRFVDAERVLLRLRDTSAEAKRELDEIRESLQVKQSGWALFKENSNFRR). A helical transmembrane segment spans residues 251–271 (AVFLGVLLQVMQQFTGMNVIM). At 272–290 (YYAPKIFELAGYTNTTEQM) the chain is on the periplasmic side. Residues 291–311 (WGTVIVGLTNVLATFIAIGLV) traverse the membrane as a helical segment. Topologically, residues 312 to 321 (DRWGRKPTLT) are cytoplasmic. A helical transmembrane segment spans residues 322–342 (LGFLVMAAGMGVLGTMMHIGI). Residues 343–351 (HSPSAQYFA) lie on the Periplasmic side of the membrane. Residues 352–372 (IAMLLMFIVGFAMSAGPLIWV) traverse the membrane as a helical segment. Over 373-394 (LCSEIQPLKGRDFGITCSTATN) the chain is Cytoplasmic. Residues 395–415 (WIANMIVGATFLTMLNTLGNA) form a helical membrane-spanning segment. Residue Asn416 is a topological domain, periplasmic. Residues 417–437 (TFWVYAALNVLFILLTLWLVP) traverse the membrane as a helical segment. Residues 438-464 (ETKHVSLEHIERNLMKGRKLREIGAHD) are Cytoplasmic-facing.

The protein belongs to the major facilitator superfamily. Sugar transporter (TC 2.A.1.1) family.

The protein localises to the cell inner membrane. Its function is as follows. Uptake of galactose across the boundary membrane with the concomitant transport of protons into the cell (symport system). The protein is Galactose-proton symporter (galP) of Escherichia coli O6:H1 (strain CFT073 / ATCC 700928 / UPEC).